A 444-amino-acid polypeptide reads, in one-letter code: Phosphoribosylamine--glycine ligase (444 aa).

The 216-residue stretch at 109–324 (RNLFKKYEID…FLDVCFAIAE (216 aa)) folds into the ATP-grasp domain. 140-202 (MTSLGKDVVV…EEKLVGVEFT (63 aa)) is an ATP binding site. The Mg(2+) site is built by glutamine 282, glutamate 294, and asparagine 296. Mn(2+) is bound by residues glutamine 282, glutamate 294, and asparagine 296.

Belongs to the GARS family. Mg(2+) is required as a cofactor. It depends on Mn(2+) as a cofactor.

It carries out the reaction 5-phospho-beta-D-ribosylamine + glycine + ATP = N(1)-(5-phospho-beta-D-ribosyl)glycinamide + ADP + phosphate + H(+). The protein operates within purine metabolism; IMP biosynthesis via de novo pathway; N(1)-(5-phospho-D-ribosyl)glycinamide from 5-phospho-alpha-D-ribose 1-diphosphate: step 2/2. The polypeptide is Phosphoribosylamine--glycine ligase (Methanococcus maripaludis (strain C7 / ATCC BAA-1331)).